A 176-amino-acid polypeptide reads, in one-letter code: Inner membrane-spanning protein YciB (176 aa).

6 helical membrane passes run 3 to 23, 24 to 44, 49 to 69, 72 to 92, 121 to 141, and 149 to 169; these read FLFD…WGIF, TATA…AFRH, TMLW…LVLH, KFIQ…LLAA, LAWA…VHNF, and FKLF…SLWL.

This sequence belongs to the YciB family.

The protein localises to the cell inner membrane. In terms of biological role, plays a role in cell envelope biogenesis, maintenance of cell envelope integrity and membrane homeostasis. The chain is Inner membrane-spanning protein YciB from Burkholderia cenocepacia (strain ATCC BAA-245 / DSM 16553 / LMG 16656 / NCTC 13227 / J2315 / CF5610) (Burkholderia cepacia (strain J2315)).